Consider the following 394-residue polypeptide: Probable purine permease 23 (394 aa).

Positions 1–20 (MEMTEASKHTTTHEESEHVQ) are enriched in basic and acidic residues. The segment at 1-24 (MEMTEASKHTTTHEESEHVQNPEP) is disordered. At S29 the chain carries Phosphoserine. 10 consecutive transmembrane segments (helical) span residues 43–63 (ISVL…ILLL), 85–105 (WMQA…FFIF), 124–144 (LILL…LYAL), 152–172 (GFFM…TAII), 180–200 (WIII…PVFS), 211–231 (GIQA…LCLV), 254–274 (VLEM…VGLF), 301–321 (VGLA…VLYV), 328–348 (IVHM…FDFI), and 352–372 (FSWP…SYFY).

It belongs to the purine permeases (TC 2.A.7.14) family.

It localises to the membrane. This Arabidopsis thaliana (Mouse-ear cress) protein is Probable purine permease 23 (PUP23).